Reading from the N-terminus, the 98-residue chain is NADH-ubiquinone oxidoreductase chain 4L (98 aa).

The next 3 helical transmembrane spans lie at 2–22 (PSIS…MLMF), 29–49 (SLLC…LIIL), and 61–81 (ILLL…LVMV).

This sequence belongs to the complex I subunit 4L family. As to quaternary structure, core subunit of respiratory chain NADH dehydrogenase (Complex I) which is composed of 45 different subunits.

It localises to the mitochondrion inner membrane. The catalysed reaction is a ubiquinone + NADH + 5 H(+)(in) = a ubiquinol + NAD(+) + 4 H(+)(out). Functionally, core subunit of the mitochondrial membrane respiratory chain NADH dehydrogenase (Complex I) which catalyzes electron transfer from NADH through the respiratory chain, using ubiquinone as an electron acceptor. Part of the enzyme membrane arm which is embedded in the lipid bilayer and involved in proton translocation. This chain is NADH-ubiquinone oxidoreductase chain 4L (MT-ND4L), found in Microcebus griseorufus (Gray-brown mouse lemur).